Consider the following 166-residue polypeptide: Eukaryotic translation initiation factor 5A (166 aa).

Lysine 52 carries the hypusine modification. The tract at residues 99–125 (DREDPSKPAHLSLMDDEGETRDNLDMP) is disordered.

The protein belongs to the eIF-5A family. In terms of processing, lys-52 undergoes hypusination, a unique post-translational modification that consists in the addition of a butylamino group from spermidine to lysine side chain, leading to the formation of the unusual amino acid hypusine. eIF-5As are the only known proteins to undergo this modification, which is essential for their function. Hypusination is mediated by the consecutive action of deoxyhypusine synthase DHSc and deoxyhypusine hydroxylase DOHH.

It localises to the cytoplasm. Its function is as follows. Translation factor that promotes translation elongation and termination, particularly upon ribosome stalling at specific amino acid sequence contexts. Binds between the exit (E) and peptidyl (P) site of the ribosome and promotes rescue of stalled ribosome: specifically required for efficient translation of polyproline-containing peptides as well as other motifs that stall the ribosome. Acts as a ribosome quality control (RQC) cofactor by joining the RQC complex to facilitate peptidyl transfer during CAT tailing step. Required for cell growth during both bloodstream (BF) and insect procyclic (PF) life cycle stages and for survival of the bloodstream form. The polypeptide is Eukaryotic translation initiation factor 5A (Trypanosoma brucei brucei (strain 927/4 GUTat10.1)).